A 265-amino-acid polypeptide reads, in one-letter code: Thiazole synthase (265 aa).

Lys106 (schiff-base intermediate with DXP) is an active-site residue. 1-deoxy-D-xylulose 5-phosphate contacts are provided by residues Gly167, 193 to 194 (AG), and 215 to 216 (NS).

This sequence belongs to the ThiG family. As to quaternary structure, homotetramer. Forms heterodimers with either ThiH or ThiS.

It is found in the cytoplasm. The catalysed reaction is [ThiS sulfur-carrier protein]-C-terminal-Gly-aminoethanethioate + 2-iminoacetate + 1-deoxy-D-xylulose 5-phosphate = [ThiS sulfur-carrier protein]-C-terminal Gly-Gly + 2-[(2R,5Z)-2-carboxy-4-methylthiazol-5(2H)-ylidene]ethyl phosphate + 2 H2O + H(+). The protein operates within cofactor biosynthesis; thiamine diphosphate biosynthesis. In terms of biological role, catalyzes the rearrangement of 1-deoxy-D-xylulose 5-phosphate (DXP) to produce the thiazole phosphate moiety of thiamine. Sulfur is provided by the thiocarboxylate moiety of the carrier protein ThiS. In vitro, sulfur can be provided by H(2)S. The sequence is that of Thiazole synthase from Prochlorococcus marinus subsp. pastoris (strain CCMP1986 / NIES-2087 / MED4).